Consider the following 235-residue polypeptide: Large ribosomal subunit protein uL1 (235 aa).

The protein belongs to the universal ribosomal protein uL1 family. As to quaternary structure, part of the 50S ribosomal subunit.

Binds directly to 23S rRNA. The L1 stalk is quite mobile in the ribosome, and is involved in E site tRNA release. Functionally, protein L1 is also a translational repressor protein, it controls the translation of the L11 operon by binding to its mRNA. The sequence is that of Large ribosomal subunit protein uL1 from Prochlorococcus marinus (strain NATL1A).